The sequence spans 474 residues: Protein Rv3254 (474 aa).

Residues 1–4 (MTGR) constitute a propeptide that is removed on maturation.

The polypeptide is Protein Rv3254 (Mycobacterium tuberculosis (strain ATCC 25618 / H37Rv)).